We begin with the raw amino-acid sequence, 234 residues long: Opacity protein opA51 (234 aa).

Residue Ala1 is a signal peptide.

The protein belongs to the opacity porin family.

The protein resides in the cell outer membrane. In terms of biological role, implicated in a number of adherence functions. OPA proteins are implicated in pathogenesis and are subject to phase variation. This Neisseria gonorrhoeae protein is Opacity protein opA51 (opaB).